We begin with the raw amino-acid sequence, 102 residues long: Urease subunit beta (102 aa).

The protein belongs to the urease beta subunit family. As to quaternary structure, heterotrimer of UreA (gamma), UreB (beta) and UreC (alpha) subunits. Three heterotrimers associate to form the active enzyme.

It localises to the cytoplasm. The enzyme catalyses urea + 2 H2O + H(+) = hydrogencarbonate + 2 NH4(+). The protein operates within nitrogen metabolism; urea degradation; CO(2) and NH(3) from urea (urease route): step 1/1. The chain is Urease subunit beta from Pseudomonas syringae pv. tomato (strain ATCC BAA-871 / DC3000).